Here is a 358-residue protein sequence, read N- to C-terminus: uncharacterized protein (358 aa).

Residues 229-264 form the EF-hand domain; it reads KQLHEFKLAFDYFDQEKNGWLDYEHFELCLKSQGYN. Ca(2+)-binding residues include D242, N246, W248, and H253.

This is an uncharacterized protein from Caenorhabditis elegans.